A 437-amino-acid chain; its full sequence is tRNA-2-methylthio-N(6)-dimethylallyladenosine synthase (437 aa).

The MTTase N-terminal domain maps to methionine 1–alanine 115. Positions 10, 46, 78, 148, 152, and 155 each coordinate [4Fe-4S] cluster. The region spanning lysine 134–glutamate 367 is the Radical SAM core domain. One can recognise a TRAM domain in the interval lysine 370–glycine 436.

This sequence belongs to the methylthiotransferase family. MiaB subfamily. Monomer. [4Fe-4S] cluster serves as cofactor.

Its subcellular location is the cytoplasm. The catalysed reaction is N(6)-dimethylallyladenosine(37) in tRNA + (sulfur carrier)-SH + AH2 + 2 S-adenosyl-L-methionine = 2-methylsulfanyl-N(6)-dimethylallyladenosine(37) in tRNA + (sulfur carrier)-H + 5'-deoxyadenosine + L-methionine + A + S-adenosyl-L-homocysteine + 2 H(+). Functionally, catalyzes the methylthiolation of N6-(dimethylallyl)adenosine (i(6)A), leading to the formation of 2-methylthio-N6-(dimethylallyl)adenosine (ms(2)i(6)A) at position 37 in tRNAs that read codons beginning with uridine. In Helicobacter pylori (strain G27), this protein is tRNA-2-methylthio-N(6)-dimethylallyladenosine synthase.